The sequence spans 478 residues: 2,5-dioxopentanoate dehydrogenase (478 aa).

NADP(+)-binding positions include 148-149 (WN), 172-175 (KPAT), and 225-226 (GS). The active-site Proton acceptor is Glu249. The active-site Nucleophile is the Cys283. Glu379 is a binding site for NADP(+).

This sequence belongs to the aldehyde dehydrogenase family. As to quaternary structure, homotetramer.

It carries out the reaction 2,5-dioxopentanoate + NADP(+) + H2O = 2-oxoglutarate + NADPH + 2 H(+). Its function is as follows. 2,5-dioxopentanoate dehydrogenase involved in the degradation of pentoses such as D-arabinose or D-xylose, a major component of hemicelluloses such as xylan. Catalyzes the fifth reaction in the pentose utilization pathway through dehydratation of 2,5-dioxopentanoate into 2-oxoglutarate. Also shows dehydrogenase activity toward glycolaldehyde and DL-glyceraldehyde. This Saccharolobus solfataricus (strain ATCC 35092 / DSM 1617 / JCM 11322 / P2) (Sulfolobus solfataricus) protein is 2,5-dioxopentanoate dehydrogenase.